Here is a 212-residue protein sequence, read N- to C-terminus: Pyridoxine/pyridoxamine 5'-phosphate oxidase (212 aa).

Substrate is bound by residues 7–10 and Lys65; that span reads REEY. Residues 60–65, 75–76, Lys82, and Gln104 each bind FMN; these read RTVLLK and FT. Positions 122, 126, and 130 each coordinate substrate. Residues 139-140 and Trp184 each bind FMN; that span reads QS. 190-192 provides a ligand contact to substrate; it reads RLH. Arg194 contacts FMN.

This sequence belongs to the pyridoxamine 5'-phosphate oxidase family. As to quaternary structure, homodimer. Requires FMN as cofactor.

The catalysed reaction is pyridoxamine 5'-phosphate + O2 + H2O = pyridoxal 5'-phosphate + H2O2 + NH4(+). It catalyses the reaction pyridoxine 5'-phosphate + O2 = pyridoxal 5'-phosphate + H2O2. Its pathway is cofactor metabolism; pyridoxal 5'-phosphate salvage; pyridoxal 5'-phosphate from pyridoxamine 5'-phosphate: step 1/1. It participates in cofactor metabolism; pyridoxal 5'-phosphate salvage; pyridoxal 5'-phosphate from pyridoxine 5'-phosphate: step 1/1. In terms of biological role, catalyzes the oxidation of either pyridoxine 5'-phosphate (PNP) or pyridoxamine 5'-phosphate (PMP) into pyridoxal 5'-phosphate (PLP). The protein is Pyridoxine/pyridoxamine 5'-phosphate oxidase of Rippkaea orientalis (strain PCC 8801 / RF-1) (Cyanothece sp. (strain PCC 8801)).